The following is a 380-amino-acid chain: Queuine tRNA-ribosyltransferase (380 aa).

The active-site Proton acceptor is the Asp96. Residues 96–100, Asp150, Gln193, and Gly220 contribute to the substrate site; that span reads DSGGF. The RNA binding stretch occupies residues 251-257; that stretch reads GVGAPDS. The Nucleophile role is filled by Asp270. An RNA binding; important for wobble base 34 recognition region spans residues 275–279; the sequence is TRIAR. Zn(2+) contacts are provided by Cys308, Cys310, Cys313, and His339.

It belongs to the queuine tRNA-ribosyltransferase family. In terms of assembly, homodimer. Within each dimer, one monomer is responsible for RNA recognition and catalysis, while the other monomer binds to the replacement base PreQ1. Zn(2+) serves as cofactor.

It carries out the reaction 7-aminomethyl-7-carbaguanine + guanosine(34) in tRNA = 7-aminomethyl-7-carbaguanosine(34) in tRNA + guanine. It participates in tRNA modification; tRNA-queuosine biosynthesis. In terms of biological role, catalyzes the base-exchange of a guanine (G) residue with the queuine precursor 7-aminomethyl-7-deazaguanine (PreQ1) at position 34 (anticodon wobble position) in tRNAs with GU(N) anticodons (tRNA-Asp, -Asn, -His and -Tyr). Catalysis occurs through a double-displacement mechanism. The nucleophile active site attacks the C1' of nucleotide 34 to detach the guanine base from the RNA, forming a covalent enzyme-RNA intermediate. The proton acceptor active site deprotonates the incoming PreQ1, allowing a nucleophilic attack on the C1' of the ribose to form the product. After dissociation, two additional enzymatic reactions on the tRNA convert PreQ1 to queuine (Q), resulting in the hypermodified nucleoside queuosine (7-(((4,5-cis-dihydroxy-2-cyclopenten-1-yl)amino)methyl)-7-deazaguanosine). This is Queuine tRNA-ribosyltransferase from Streptococcus thermophilus (strain ATCC BAA-491 / LMD-9).